Here is a 717-residue protein sequence, read N- to C-terminus: Adhesion cell surface protein MAD1 (717 aa).

A signal peptide spans 1–19 (MKSALSVVVAAAGVQQASA). Low complexity-rich tracts occupy residues 237 to 254 (TPVT…QTTT) and 262 to 274 (SKET…QTTP). 2 disordered regions span residues 237–392 (TPVT…ATTT) and 451–506 (RTQS…TPPC). 8 tandem repeats follow at residues 275–286 (GKETTPAQQTTP), 287–298 (SKETTPVQQTTS), 299–310 (GKETTPAQQTTP), 311–328 (GKET…QTTP), 329–340 (GKETTPAQQTTP), 341–352 (GKETTPAQQTTP), 353–364 (GKETTPAQQTTP), and 365–376 (GKETTPAQQTTP). The span at 275 to 366 (GKETTPAQQT…TPAQQTTPGK (92 aa)) shows a compositional bias: polar residues. Low complexity-rich tracts occupy residues 368-392 (TTPA…ATTT) and 484-503 (QPTG…STQT). A CFEM domain is found at 481–595 (TPEQPTGEKP…TQIITVTGTP (115 aa)). Disulfide bonds link Cys-513–Cys-546, Cys-524–Cys-532, and Cys-534–Cys-568. Residue Asp-529 coordinates heme. Asn-614 carries an N-linked (GlcNAc...) asparagine glycan. The disordered stretch occupies residues 632–690 (PTPTGGVPNQPPATASVPAGQNPPPVTGQNPPPAVTDQSPPPAITTGTGGVIPPKPTGS). Residues 652 to 674 (QNPPPVTGQNPPPAVTDQSPPPA) are compositionally biased toward pro residues. Ala-695 carries GPI-anchor amidated alanine lipidation. The propeptide at 696–717 (GSGRVGAGLGMVLAVAAFVAAL) is removed in mature form.

The protein belongs to the RBT5 family. Post-translationally, the GPI-anchor is attached to the protein in the endoplasmic reticulum and serves to target the protein to the cell surface. There, the glucosamine-inositol phospholipid moiety is cleaved off and the GPI-modified mannoprotein is covalently attached via its lipidless GPI glycan remnant to the 1,6-beta-glucan of the outer cell wall layer.

It localises to the secreted. The protein localises to the cell wall. Its subcellular location is the cell membrane. In terms of biological role, cell surface adhesion protein that plays a key role in virulence by allowing adherence to the insect host surface. Required to orientate the cytoskeleton and stimulate the expression of genes involved in the cell cycle. Is also involved in achieving the septin hourglass shape and subsequent separation of cells. The protein is Adhesion cell surface protein MAD1 of Metarhizium anisopliae (Entomophthora anisopliae).